Consider the following 152-residue polypeptide: UPF0225 protein YchJ (152 aa).

It belongs to the UPF0225 family.

This Salmonella gallinarum (strain 287/91 / NCTC 13346) protein is UPF0225 protein YchJ.